A 583-amino-acid polypeptide reads, in one-letter code: Complement factor I (583 aa).

A signal peptide spans 1–18 (MKLLHVFLLFLCFHLRFC). 17 cysteine pairs are disulfide-bonded: Cys33–Cys255, Cys43–Cys54, Cys48–Cys59, Cys61–Cys93, Cys67–Cys86, Cys75–Cys106, Cys141–Cys181, Cys154–Cys214, Cys186–Cys196, Cys229–Cys247, Cys241–Cys256, Cys259–Cys271, Cys266–Cys284, Cys278–Cys293, Cys327–Cys453, Cys365–Cys381, and Cys373–Cys444. A Kazal-like domain is found at 55-108 (IEGTCVCKLPYQCPKNGTAVCATNRRSFPTYCQQKSLECLHPGTKFLNNGTCTA). N-linked (GlcNAc...) asparagine glycosylation is present at Asn70. Asn103 is a glycosylation site (N-linked (GlcNAc...) (complex) asparagine). An SRCR domain is found at 114–212 (VSLKHGNTDS…TMGYQDFADV (99 aa)). N-linked (GlcNAc...) asparagine glycosylation is present at Asn177. 2 LDL-receptor class A domains span residues 213-257 (VCYT…LCCK) and 258-294 (ACQG…VGCA). Residues Lys239, Asp242, Ile244, Asp246, Asp252, and Glu253 each contribute to the Ca(2+) site. Ca(2+)-binding residues include Tyr276, Asn279, Glu281, Asp283, Asp289, and Glu290. Residues 340–574 (IVGGKRAQLG…YFDWISYHVG (235 aa)) enclose the Peptidase S1 domain. Active-site charge relay system residues include His380 and Asp429. N-linked (GlcNAc...) asparagine glycans are attached at residues Asn464 and Asn494. 3 cysteine pairs are disulfide-bonded: Cys467/Cys531, Cys495/Cys510, and Cys521/Cys550. Ser525 (charge relay system) is an active-site residue. N-linked (GlcNAc...) asparagine glycosylation occurs at Asn536.

Belongs to the peptidase S1 family. Heterodimer of a light and heavy chains; disulfide-linked. The fully processed and mature protein circulates as a zymogen, and is allosterically activated by substrate-induced remodeling of the active site. Interacts with C3b. Interacts with complement factor H. In terms of assembly, (Microbial infection) Interacts with Staphylococcus aureus clumping factor A/ClfA; this interaction enhances cleavage of C3b into iC3b by CFI. Expressed in the liver by hepatocytes. Also present in other cells such as monocytes, fibroblasts or keratinocytes.

The protein resides in the secreted. It localises to the extracellular space. It carries out the reaction Inactivates complement subcomponents C3b, iC3b and C4b by proteolytic cleavage.. In terms of biological role, trypsin-like serine protease that plays an essential role in regulating the immune response by controlling all complement pathways. Inhibits these pathways by cleaving three peptide bonds in the alpha-chain of C3b and two bonds in the alpha-chain of C4b thereby inactivating these proteins. Essential cofactors for these reactions include factor H and C4BP in the fluid phase and membrane cofactor protein/CD46 and CR1 on cell surfaces. The presence of these cofactors on healthy cells allows degradation of deposited C3b by CFI in order to prevent undesired complement activation, while in apoptotic cells or microbes, the absence of such cofactors leads to C3b-mediated complement activation and subsequent opsonization. The sequence is that of Complement factor I (CFI) from Homo sapiens (Human).